A 255-amino-acid chain; its full sequence is Probable transcriptional regulatory protein CMS0715 (255 aa).

Belongs to the TACO1 family.

The protein resides in the cytoplasm. The chain is Probable transcriptional regulatory protein CMS0715 from Clavibacter sepedonicus (Clavibacter michiganensis subsp. sepedonicus).